The chain runs to 230 residues: Cytidylate kinase (230 aa).

ATP is bound at residue 12 to 20 (GPSGAGKGT).

It belongs to the cytidylate kinase family. Type 1 subfamily.

It is found in the cytoplasm. It carries out the reaction CMP + ATP = CDP + ADP. The catalysed reaction is dCMP + ATP = dCDP + ADP. The protein is Cytidylate kinase of Shewanella sp. (strain MR-7).